A 191-amino-acid polypeptide reads, in one-letter code: FMN reductase (NADH) RutF (191 aa).

This sequence belongs to the non-flavoprotein flavin reductase family. RutF subfamily.

It catalyses the reaction FMNH2 + NAD(+) = FMN + NADH + 2 H(+). In terms of biological role, catalyzes the reduction of FMN to FMNH2 which is used to reduce pyrimidine by RutA via the Rut pathway. The protein is FMN reductase (NADH) RutF of Escherichia coli O1:K1 / APEC.